The primary structure comprises 391 residues: Formate-dependent phosphoribosylglycinamide formyltransferase (391 aa).

N(1)-(5-phospho-beta-D-ribosyl)glycinamide-binding positions include 18 to 19 and E78; that span reads EL. ATP-binding positions include R110, K151, 156–161, 191–194, and E199; these read SSGKGQ and EEFI. Residues 115–305 enclose the ATP-grasp domain; the sequence is DLASKDLKIK…EFELHLRAFL (191 aa). Positions 264 and 276 each coordinate Mg(2+). Residues D283, K353, and 360-361 contribute to the N(1)-(5-phospho-beta-D-ribosyl)glycinamide site; that span reads RR.

This sequence belongs to the PurK/PurT family. In terms of assembly, homodimer.

The enzyme catalyses N(1)-(5-phospho-beta-D-ribosyl)glycinamide + formate + ATP = N(2)-formyl-N(1)-(5-phospho-beta-D-ribosyl)glycinamide + ADP + phosphate + H(+). It participates in purine metabolism; IMP biosynthesis via de novo pathway; N(2)-formyl-N(1)-(5-phospho-D-ribosyl)glycinamide from N(1)-(5-phospho-D-ribosyl)glycinamide (formate route): step 1/1. In terms of biological role, involved in the de novo purine biosynthesis. Catalyzes the transfer of formate to 5-phospho-ribosyl-glycinamide (GAR), producing 5-phospho-ribosyl-N-formylglycinamide (FGAR). Formate is provided by PurU via hydrolysis of 10-formyl-tetrahydrofolate. This Prochlorococcus marinus (strain MIT 9301) protein is Formate-dependent phosphoribosylglycinamide formyltransferase.